The following is a 125-amino-acid chain: MRHYEIILLIHPDQSEQVPAMLERYKGMIVAGGGQVHRVEDWGRRQLAYLINKLAKAHYLCLNIEADQAVMAELEHAFKFNDAVLRHLTVQKKKAETGASSMMKTVEREEARKASQAEFAASNER.

The segment at 94–125 is disordered; that stretch reads KAETGASSMMKTVEREEARKASQAEFAASNER. The segment covering 105 to 115 has biased composition (basic and acidic residues); sequence TVEREEARKAS.

It belongs to the bacterial ribosomal protein bS6 family.

Functionally, binds together with bS18 to 16S ribosomal RNA. This is Small ribosomal subunit protein bS6 from Acidovorax ebreus (strain TPSY) (Diaphorobacter sp. (strain TPSY)).